Reading from the N-terminus, the 733-residue chain is 1,4-alpha-glucan branching enzyme GlgB (733 aa).

The active-site Nucleophile is the D409. E462 functions as the Proton donor in the catalytic mechanism.

This sequence belongs to the glycosyl hydrolase 13 family. GlgB subfamily. As to quaternary structure, monomer.

It carries out the reaction Transfers a segment of a (1-&gt;4)-alpha-D-glucan chain to a primary hydroxy group in a similar glucan chain.. The protein operates within glycan biosynthesis; glycogen biosynthesis. Catalyzes the formation of the alpha-1,6-glucosidic linkages in glycogen by scission of a 1,4-alpha-linked oligosaccharide from growing alpha-1,4-glucan chains and the subsequent attachment of the oligosaccharide to the alpha-1,6 position. This chain is 1,4-alpha-glucan branching enzyme GlgB, found in Gloeobacter violaceus (strain ATCC 29082 / PCC 7421).